A 236-amino-acid chain; its full sequence is Large ribosomal subunit protein uL2 (236 aa).

Positions 198-236 (DHPFGGGGRQHPGRPKTVSRGTPPGRKVGSIAARRTGKR) are disordered.

This sequence belongs to the universal ribosomal protein uL2 family. As to quaternary structure, part of the 50S ribosomal subunit. Forms a bridge to the 30S subunit in the 70S ribosome.

Functionally, one of the primary rRNA binding proteins. Required for association of the 30S and 50S subunits to form the 70S ribosome, for tRNA binding and peptide bond formation. It has been suggested to have peptidyltransferase activity; this is somewhat controversial. Makes several contacts with the 16S rRNA in the 70S ribosome. The sequence is that of Large ribosomal subunit protein uL2 from Methanothrix thermoacetophila (strain DSM 6194 / JCM 14653 / NBRC 101360 / PT) (Methanosaeta thermophila).